Here is a 918-residue protein sequence, read N- to C-terminus: Probable UDP-N-acetylglucosamine--peptide N-acetylglucosaminyltransferase SPINDLY (918 aa).

TPR repeat units lie at residues 34 to 66 (GKEAITYAKILRSRNKFVDALAIYELEKDSKNV), 67 to 99 (EAHIGKGICLQTQNKGNLAFDCFSEAIRLDPHN), 101 to 132 (CALTHCGILYKDEGRLVEAASYQKALQADPSY), 140 to 171 (ATVLNDLGTSLKGNTQEGIQKYYEAVKIDPHY), 172 to 205 (APACYNLGVVYSEMMQYDVALSCYERAATESPTY), 207 to 238 (DAYCNTGIIYKNRGDLCLAVSPNFEIAKNNMG), 239 to 271 (IALTDLGTKEKLEGDIDQGVAYYKKALYYNWHY), 273 to 305 (DAMYNLGVAYGEMLKFDMAIIFDELAFHFNPHC), 306 to 339 (AEACNNLGVIYKDRDNLDKAVECYQKALSIKPNF), 341 to 373 (QSLNNLGVVFTVQGKMDAAASMIEKAIVANPTY), and 374 to 407 (AEAYNNLGVLYRDAGNIFLAIEAYEQCLKIDPDS). Positions 408 to 918 (RNAGQNRLLA…LNCGDQCFRV (511 aa)) are catalytic region. The span at 843-853 (QLHQQPNTSPQ) shows a compositional bias: polar residues. The disordered stretch occupies residues 843 to 877 (QLHQQPNTSPQKLVKDEPADDASGPEHGPASKDNP).

The protein belongs to the glycosyltransferase 41 family. O-GlcNAc transferase subfamily.

Its subcellular location is the nucleus. The enzyme catalyses L-seryl-[protein] + UDP-N-acetyl-alpha-D-glucosamine = 3-O-(N-acetyl-beta-D-glucosaminyl)-L-seryl-[protein] + UDP + H(+). It catalyses the reaction L-threonyl-[protein] + UDP-N-acetyl-alpha-D-glucosamine = 3-O-(N-acetyl-beta-D-glucosaminyl)-L-threonyl-[protein] + UDP + H(+). It participates in protein modification; protein glycosylation. Probable O-linked N-acetylglucosamine transferase (OGT) involved in various processes such as gibberellin (GA) signaling pathway. OGTs catalyze the addition of nucleotide-activated sugars directly onto the polypeptide through O-glycosidic linkage with the hydroxyl of serine or threonine. Probably acts by adding O-linked sugars to yet unknown proteins. May function as a negative regulator of GA signal transduction during vernalization, inhibiting adventitious shoot elongation during vernalization. In Eustoma exaltatum subsp. russellianum (Bluebells), this protein is Probable UDP-N-acetylglucosamine--peptide N-acetylglucosaminyltransferase SPINDLY (SPY).